The primary structure comprises 251 residues: MTSLVSLENVSVSFGQRRVLSDVSLELKPGKILTLLGPNGAGKSTLVRVVLGLVTPDEGVIKRNGKLRIGYVPQKLYLDTTLPLTVNRFLRLRPGTHKEDILPALKRVQAGHLINAPMQKLSGGETQRVLLARALLNRPQLLVLDEPTQGVDVNGQVALYDLIDQLRRELDCGVLMVSHDLHLVMAKTDEVLCLNHHICCSGTPEVVSLHPEFISMFGPRGAEQLGIYRHHHNHRHDLQGRIVLRRGNDRS.

The ABC transporter domain occupies 5 to 220 (VSLENVSVSF…PEFISMFGPR (216 aa)). An ATP-binding site is contributed by 37-44 (GPNGAGKS).

It belongs to the ABC transporter superfamily. Zinc importer (TC 3.A.1.15.5) family. The complex is composed of two ATP-binding proteins (ZnuC), two transmembrane proteins (ZnuB) and a solute-binding protein (ZnuA).

The protein localises to the cell inner membrane. It carries out the reaction Zn(2+)(out) + ATP(in) + H2O(in) = Zn(2+)(in) + ADP(in) + phosphate(in) + H(+)(in). Part of the ABC transporter complex ZnuABC involved in zinc import. Responsible for energy coupling to the transport system. This Escherichia coli O157:H7 protein is Zinc import ATP-binding protein ZnuC.